We begin with the raw amino-acid sequence, 420 residues long: Glutamyl-tRNA reductase (420 aa).

Residues 49-52 (TCNR), Ser-109, 114-116 (EPQ), and Gln-120 each bind substrate. The active-site Nucleophile is the Cys-50. Residue 189-194 (GAGETI) participates in NADP(+) binding.

The protein belongs to the glutamyl-tRNA reductase family. Homodimer.

The catalysed reaction is (S)-4-amino-5-oxopentanoate + tRNA(Glu) + NADP(+) = L-glutamyl-tRNA(Glu) + NADPH + H(+). The protein operates within porphyrin-containing compound metabolism; protoporphyrin-IX biosynthesis; 5-aminolevulinate from L-glutamyl-tRNA(Glu): step 1/2. Catalyzes the NADPH-dependent reduction of glutamyl-tRNA(Glu) to glutamate 1-semialdehyde (GSA). This chain is Glutamyl-tRNA reductase, found in Sodalis glossinidius (strain morsitans).